Consider the following 231-residue polypeptide: MFDISREQQNMLEKNKDCVITFETNRERITIENTNIKDILSDRRIHIFALCITSDNIPIIGIRRTSFMYQSVISKRRSFSEILAVDINHLKYMYNNEIKEICIRSIVPFTYSGFNNFEELVLLGGRVKNKESIYQCLSRELSEESDGILTIKTFGNKILKLTIEDKILRRTFYGYCIVCFIDQLYSEIIKPLYNIEIKELGSLFDRSSNEKYEYLHFIYNTLLTYKYGGVL.

A Nudix hydrolase domain is found at 74 to 217 (SKRRSFSEIL…SNEKYEYLHF (144 aa)). The Nudix box motif lies at 125–146 (GRVKNKESIYQCLSRELSEESD). Mg(2+) is bound at residue Glu-131. The active-site Nucleophile is the Glu-140. Residues Glu-144 and Asp-165 each coordinate Mg(2+).

This sequence belongs to the Nudix hydrolase family. Requires Mg(2+) as cofactor. Mn(2+) serves as cofactor.

Decapping enzyme required for the removal of the 5'-end m7GpppN cap tethered to viral and host mRNAs to allow their decay in cells. May therefore accelerate viral and cellular mRNA turnover to eliminate competing host mRNAs and allow stage-specific synthesis of viral proteins. Acceleration of the turnover of cellular transcripts may even promote the shutoff of host protein synthesis. Does not cleave unmethylated RNAs or RNAs shorter than 24 nucleotides. This Vertebrata (FPV) protein is Putative Nudix hydrolase FPV054.